Here is a 68-residue protein sequence, read N- to C-terminus: Conotoxin reg3.14 (68 aa).

The first 22 residues, 1–22, serve as a signal peptide directing secretion; that stretch reads MMSKLGVLLTICLLLFPLSVLP. Positions 23-52 are excised as a propeptide; it reads LDGDQPADQPAERMQDISAEQNPWFDPVKR. 3 disulfide bridges follow: Cys-53–Cys-68, Cys-54–Cys-64, and Cys-59–Cys-67.

This sequence belongs to the conotoxin M superfamily. Expressed by the venom duct.

It is found in the secreted. The chain is Conotoxin reg3.14 from Conus regius (Crown cone).